Here is a 332-residue protein sequence, read N- to C-terminus: Tyrosine--tRNA ligase (332 aa).

Tyr-32, Tyr-156, Gln-160, Asp-163, and Gln-178 together coordinate L-tyrosine. Positions 219-223 match the 'KMSKS' region motif; it reads KMSKS. Residue Lys-222 coordinates ATP.

Belongs to the class-I aminoacyl-tRNA synthetase family. TyrS type 4 subfamily. Homodimer.

It localises to the cytoplasm. The enzyme catalyses tRNA(Tyr) + L-tyrosine + ATP = L-tyrosyl-tRNA(Tyr) + AMP + diphosphate + H(+). Its function is as follows. Catalyzes the attachment of tyrosine to tRNA(Tyr) in a two-step reaction: tyrosine is first activated by ATP to form Tyr-AMP and then transferred to the acceptor end of tRNA(Tyr). This Thermoplasma acidophilum (strain ATCC 25905 / DSM 1728 / JCM 9062 / NBRC 15155 / AMRC-C165) protein is Tyrosine--tRNA ligase.